The chain runs to 563 residues: Ribulokinase (563 aa).

It belongs to the ribulokinase family.

The catalysed reaction is D-ribulose + ATP = D-ribulose 5-phosphate + ADP + H(+). It carries out the reaction L-ribulose + ATP = L-ribulose 5-phosphate + ADP + H(+). The protein operates within carbohydrate degradation; L-arabinose degradation via L-ribulose; D-xylulose 5-phosphate from L-arabinose (bacterial route): step 2/3. This chain is Ribulokinase, found in Mycolicibacterium smegmatis (Mycobacterium smegmatis).